A 1235-amino-acid polypeptide reads, in one-letter code: MSLNIPPKPEESLWTDDQWKAIQAKGNNVLVAAAAGSGKTAVLVTRIIKKLIDESANLNVDELLIVTFTNASAAEMKFRIGKGLEEALGQNPDSAHLKRQVALLNYASISTLHSFCLEIIRKYYFEADIDPSFRLIEPIESSMIRDEVLEGLLEQEYGIENNEAFFHLVESFTGDRSDAELHSLISKLYDFSRANPDPNAWLEAMVNFYNTEEITSITELPYFPIIKEDIELRVNQAKNYLLNAIDYANENNGPAPYLATLENDLVQIQALSELNWSSWTHLKTSIENIDFKRIPTLKNKSDYDEVYVEEAKKFRDAAKKEMKNIATDWFSREEVNYLSDLEKMKPDIQTLSELVKKFAANFFEEKQQRGVLDFNDLEHLALKILLNGDKASEVAQNYQKQFKEVLIDEYQDTNMVQETILRLVTNPSEAQGNLFMVGDVKQSIYRFRLAEPTLFMTKYQTFQQDGSGNGIRIDLSQNFRSRKEVLDATNFIFRQLMDKHIAEIDYDTAAELTLGAKSPETNAMATELLLIDMKTEDTETEDELSPQELQKNQVESRTIAMKIREMIDNKFPIYDKKLKQNRPIQYRDIVILSRAMTSAPDMEEAMKVQDIPFYANNNSGYFETTEVATMIALMKVVDNPYQDIPLAAVLRSPIIGLNEEELGQIRMAKKKGYFYDALLAYKDITVSETADKISDFVQQLNNWRELSIRENLTSLIWQIYQETNFYEFVGGLPGGKQRQANLRALYDRANQYEKTSFRGLFRFVRFVERLEIRGDDLGTAKTLGEKEDVVRMMTIHASKGLEFPVVIVSGLSRKFNMRDIYSKTLLDKDYGFASSYRDVEKMIVYPTIMQQAIKQKKSREMIAEEMRVLYVALTRAEEKLILVATVPDFEKTSKNWLQVAKEKETILPAATRAKAKCYLDWIGNATIRHSAFKELLCEEMIQTLATEMKLQIEIKTKEMFLTNELERAESDNWLENIKEHQPVPIQSPYKDEIQRYMEYEYQNEAATEIRAKQSVTELKRQFSLQDNWSDTTLLKEFQKVSLDRPKFLQKNKLSATEIGTAMHTLMQAVSLDYKPTKEDLEQLLRTMREKDILTDAQIKAINIKQILDFFESPLGETMLQKKDLVKREVPFSYLLPVSELYENVDIDERVLIQGVVDSMIEEEETITLIDYKTDKIEGRYADWNAAEKVMKERYHIQIKLYAEAIQAISGKKVAAAYLYFFDGQHICQINTKEGL.

One can recognise a UvrD-like helicase ATP-binding domain in the interval 12–482 (SLWTDDQWKA…IDLSQNFRSR (471 aa)). 33 to 40 (AAAGSGKT) is an ATP binding site. One can recognise a UvrD-like helicase C-terminal domain in the interval 509 to 800 (AAELTLGAKS…RMMTIHASKG (292 aa)).

This sequence belongs to the helicase family. AddA subfamily. In terms of assembly, heterodimer of AddA and AddB/RexB. Mg(2+) serves as cofactor.

It carries out the reaction Couples ATP hydrolysis with the unwinding of duplex DNA by translocating in the 3'-5' direction.. It catalyses the reaction ATP + H2O = ADP + phosphate + H(+). Functionally, the heterodimer acts as both an ATP-dependent DNA helicase and an ATP-dependent, dual-direction single-stranded exonuclease. Recognizes the chi site generating a DNA molecule suitable for the initiation of homologous recombination. The AddA nuclease domain is required for chi fragment generation; this subunit has the helicase and 3' -&gt; 5' nuclease activities. This Listeria monocytogenes serotype 4a (strain HCC23) protein is ATP-dependent helicase/nuclease subunit A.